A 484-amino-acid chain; its full sequence is Probable autolysin PH (484 aa).

In terms of domain architecture, Peptidase C51 spans 5–148; sequence KNQAEKWFDN…YYDDPMYFIR (144 aa). A MurNAc-LAA domain is found at 181–363; it reads IMLVAGHGYN…YSKLIAGAIH (183 aa). Residues 402 to 472 form the SH3b domain; the sequence is KETGYYTVAN…IATGEVDKAG (71 aa).

The enzyme catalyses Hydrolyzes the link between N-acetylmuramoyl residues and L-amino acid residues in certain cell-wall glycopeptides.. Its function is as follows. Has weak lytic activity toward S.aureus cells. Full-length protein has no activity, but fusion of the Peptidase C51 domain to the lysostaphin SH3 cell wall binding domain yields an active chimeric enzyme, suggesting that PH may be functional. This Staphylococcus aureus (strain NCTC 8325 / PS 47) protein is Probable autolysin PH.